A 213-amino-acid polypeptide reads, in one-letter code: Large ribosomal subunit protein uL1 (213 aa).

This sequence belongs to the universal ribosomal protein uL1 family. Part of the 50S ribosomal subunit.

Its function is as follows. Binds directly to 23S rRNA. Probably involved in E site tRNA release. Functionally, protein L1 is also a translational repressor protein, it controls the translation of its operon by binding to its mRNA. The polypeptide is Large ribosomal subunit protein uL1 (Methanocorpusculum labreanum (strain ATCC 43576 / DSM 4855 / Z)).